The chain runs to 133 residues: Small ribosomal subunit protein uS11 (133 aa).

It belongs to the universal ribosomal protein uS11 family. In terms of assembly, part of the 30S ribosomal subunit. Interacts with proteins S7 and S18. Binds to IF-3.

In terms of biological role, located on the platform of the 30S subunit, it bridges several disparate RNA helices of the 16S rRNA. Forms part of the Shine-Dalgarno cleft in the 70S ribosome. This is Small ribosomal subunit protein uS11 from Burkholderia pseudomallei (strain 1106a).